Reading from the N-terminus, the 663-residue chain is Translation factor GUF1, mitochondrial (663 aa).

A mitochondrion-targeting transit peptide spans 1-44 (MRGCLQSVRWLTTALRRPAPQLSCLPFQPFASTSRLFSSCASRA). A tr-type G domain is found at 65 to 245 (ERFRNFCIVA…TIVEQIPAPV (181 aa)). Residues 74 to 81 (AHVDHGKS), 138 to 142 (DTPGH), and 192 to 195 (NKVD) contribute to the GTP site.

Belongs to the TRAFAC class translation factor GTPase superfamily. Classic translation factor GTPase family. LepA subfamily.

It is found in the mitochondrion inner membrane. It catalyses the reaction GTP + H2O = GDP + phosphate + H(+). Its function is as follows. Promotes mitochondrial protein synthesis. May act as a fidelity factor of the translation reaction, by catalyzing a one-codon backward translocation of tRNAs on improperly translocated ribosomes. Binds to mitochondrial ribosomes in a GTP-dependent manner. The sequence is that of Translation factor GUF1, mitochondrial from Coccidioides posadasii (strain C735) (Valley fever fungus).